The sequence spans 32 residues: Dermaseptin-DA4 (32 aa).

In terms of tissue distribution, expressed by the skin glands.

The protein localises to the secreted. It localises to the target cell membrane. In terms of biological role, antimicrobial peptide with activity against Gram-negative bacteria, but not against Gram-positive bacteria. Active against E.coli (MIC=5 uM), and P.aeruginosa (MIC=40 uM). Acts by disrupting cell membranes. Is able to depolarize membranes of Gram-positive and Gram-negative bacteria. Also acts as a potent chemoattractant for human leukocytes and activates them mainly through a GPCR, possibly FPRL1 coupled to the ERK1/2 MAPK pathway. Is unstructured in water but become helical upon binding to anionic lipids. In contrast to most dermaseptins, is not structured in the presence of zwitterionic lipids. Does not show hemolytic activity. The sequence is that of Dermaseptin-DA4 from Agalychnis dacnicolor (Giant Mexican leaf frog).